The following is a 342-amino-acid chain: Protein pelota homolog (342 aa).

Belongs to the eukaryotic release factor 1 family. Pelota subfamily. In terms of assembly, monomer. It depends on a divalent metal cation as a cofactor.

The protein resides in the cytoplasm. May function in recognizing stalled ribosomes, interact with stem-loop structures in stalled mRNA molecules, and effect endonucleolytic cleavage of the mRNA. May play a role in the release non-functional ribosomes and degradation of damaged mRNAs. Has endoribonuclease activity. The polypeptide is Protein pelota homolog (Sulfolobus acidocaldarius (strain ATCC 33909 / DSM 639 / JCM 8929 / NBRC 15157 / NCIMB 11770)).